The chain runs to 500 residues: Kynurenine 3-monooxygenase acdD (500 aa).

FAD contacts are provided by residues Val17 and 36–38 (ELR). Residue Asn50 is glycosylated (N-linked (GlcNAc...) asparagine). Ala58 contacts FAD. Residues Arg89 and Tyr106 each coordinate L-kynurenine. FAD is bound by residues Arg118 and Leu143. Asn163 carries an N-linked (GlcNAc...) asparagine glycan. FAD contacts are provided by residues Asp321 and 332–335 (QGLN). L-kynurenine contacts are provided by Asn392 and Tyr428. Residues 451 to 471 (LLLYGSISAIISSAAIVGVLA) form a helical membrane-spanning segment.

This sequence belongs to the aromatic-ring hydroxylase family. KMO subfamily. The cofactor is FAD.

It localises to the mitochondrion outer membrane. The enzyme catalyses L-kynurenine + NADPH + O2 + H(+) = 3-hydroxy-L-kynurenine + NADP(+) + H2O. It functions in the pathway secondary metabolite biosynthesis. Its pathway is cofactor biosynthesis; NAD(+) biosynthesis; quinolinate from L-kynurenine: step 1/3. In terms of biological role, indoleamine 2,3-dioxygenase; part of the gene cluster that mediates the biosynthesis of aspcandine, a pyrrolobenzazepine alkaloid. Initially, the indoleamine 2,3-dioxygenase acdA accepts L-tryptophan and performs the oxidative opening of the indole ring to yield N'-formyl-L-kynurenine, which undergoes the spontaneous deformylation reaction to provide L-kynurenine. The kynurenine 3-monooxygenase acdD then hydroxylates L-kynurenine to afford 3-hydroxy-L-kynurenine. 3-hydroxy-L-kynurenine is activated by the A domain of the NRPS-PKS acdB and subsequently loaded onto the enzyme. The KS domain conducts the decarboxylative condensation of the 3-hydroxy-L-kynurenyl and malonyl moieties, and subsequent nucleophilic attacks by the two amino groups would occur nonenzymatically at two distinct positions, achieving the chain release and the construction of the tricyclic system. Finally, the dehydration reaction completes the biosynthesis to yield aspcandine. The sequence is that of Kynurenine 3-monooxygenase acdD from Aspergillus candidus.